The sequence spans 1050 residues: Toll-like receptor 7 (1050 aa).

An N-terminal signal peptide occupies residues 1–26 (MVFSMWTRKRQILIFLNMLLVSRVFG). Topologically, residues 27–837 (FRWFPKTLPC…SLDLYTCELD (811 aa)) are extracellular. 20 LRR repeats span residues 42-64 (IPEAHVIVDCTDKHLTEIPEGIP), 65-87 (TNTTNLTLTINHIPSISPDSFRR), 89-111 (NHLEEIDLRCNCVPVLLGSKANV), 126-149 (LSDLKALYLDGNQLLEIPQDLPSS), 151-170 (HLLSLEANNIFSITKENLTE), 171-195 (LVNIETLYLGQNCYYRNPCNVSYSI), 203-226 (MRNLKVLSLKDNNVTAVPTTLPPN), 228-247 (LELYLYNNIIKKIQENDFNN), 248-273 (LNELQVLDLSGNCPRCYNVPYPCTPC), 275-289 (NNSPLQIHDNAFNSL), 290-312 (TELKVLRLHSNSLQHVPPTWFKN), 314-337 (RNLQELDLSQNYLAREIEEAKFLH), 339-364 (LPNLVELDFSFNYELQVYHASITLPH), 369-392 (LENLKILRVKGYVFKELKNSSLSV), 396-419 (LPRLEVLDLGTNFIKIADLNIFKH), 421-443 (ENLKLIDLSVNKISPSEESREVG), 493-516 (HIYGQTLDLSRNNIFFIKPSDFQH), 517-542 (LSFLKCLNLSGNTIGQTLNGSELWPL), 543-565 (RELRYLDFSNNRLDLLYSTAFEE), and 567-589 (QSLEVLDLSSNSHYFQAEGITHM). 2 N-linked (GlcNAc...) asparagine glycosylation sites follow: asparagine 66 and asparagine 69. Residues asparagine 167, asparagine 190, and asparagine 215 are each glycosylated (N-linked (GlcNAc...) asparagine). A glycan (N-linked (GlcNAc...) asparagine) is linked at asparagine 387. N-linked (GlcNAc...) asparagine glycans are attached at residues asparagine 524 and asparagine 535. Asparagine 591 carries an N-linked (GlcNAc...) asparagine glycan. LRR repeat units follow at residues 596 to 619 (LRLLDKLMMNDNDISTSASRTMES), 620 to 645 (DSLRILEFRGNHLDVLWRAGDNRYLD), 650 to 673 (LFNLEVLDISRNSLNSLPPEVFEG), 675 to 698 (PPNLKNLSLAKNGLKSFFWDRLQL), 699 to 722 (LKHLEILDLSHNQLTKVPERLANC), 724 to 746 (KSLTTLILKHNQIRQLTKYFLED), 747 to 770 (ALQLRYLDISSNKIQVIQKTSFPE), and 773 to 796 (LNNLEMLVLHHNRFLCNCDAVWFV). Residues asparagine 680 and asparagine 721 are each glycosylated (N-linked (GlcNAc...) asparagine). The N-linked (GlcNAc...) asparagine glycan is linked to asparagine 800. Residues 838-858 (LTNLILFSVSISSVLFLMVVM) form a helical membrane-spanning segment. The Cytoplasmic segment spans residues 859-1050 (TTSHLFFWDM…AYSQMFKETV (192 aa)). One can recognise a TIR domain in the interval 890-1034 (SCYDAFIVYD…YFWQCLKNAL (145 aa)).

It belongs to the Toll-like receptor family. As to quaternary structure, homodimer. Interacts with MYD88 via their respective TIR domains. Interacts with UNC93B1. Interacts with SMPDL3B. The first cleavage is performed by asparagine endopeptidase or cathepsin family members. This initial cleavage event is followed by a trimming event that is solely cathepsin mediated and required for optimal receptor signaling.

It is found in the endosome membrane. The protein resides in the endoplasmic reticulum membrane. Its subcellular location is the lysosome. It localises to the cytoplasmic vesicle. The protein localises to the phagosome. Its activity is regulated as follows. Activated by guanosine analogs including deoxyguanosine, 7-thia-8-oxoguanosine or 7-deazaguanosine in a RNA-independent manner. Endosomal receptor that plays a key role in innate and adaptive immunity. Controls host immune response against pathogens through recognition of uridine-containing single strand RNAs (ssRNAs) of viral origin or guanosine analogs. Upon binding to agonists, undergoes dimerization that brings TIR domains from the two molecules into direct contact, leading to the recruitment of TIR-containing downstream adapter MYD88 through homotypic interaction. In turn, the Myddosome signaling complex is formed involving IRAK4, IRAK1, TRAF6, TRAF3 leading to activation of downstream transcription factors NF-kappa-B and IRF7 to induce pro-inflammatory cytokines and interferons, respectively. In plasmacytoid dendritic cells, RNASET2 endonuclease cooperates with PLD3 or PLD4 5'-&gt;3' exonucleases to process RNA and release 2',3'-cyclic guanosine monophosphate (2',3'-cGMP) and cytidine-rich RNA fragments that occupy TLR7 ligand-binding pockets and trigger a signaling-competent state. This chain is Toll-like receptor 7 (Tlr7), found in Mus musculus (Mouse).